We begin with the raw amino-acid sequence, 344 residues long: Phosphoribosylformylglycinamidine cyclo-ligase (344 aa).

Belongs to the AIR synthase family.

The protein localises to the cytoplasm. It carries out the reaction 2-formamido-N(1)-(5-O-phospho-beta-D-ribosyl)acetamidine + ATP = 5-amino-1-(5-phospho-beta-D-ribosyl)imidazole + ADP + phosphate + H(+). It participates in purine metabolism; IMP biosynthesis via de novo pathway; 5-amino-1-(5-phospho-D-ribosyl)imidazole from N(2)-formyl-N(1)-(5-phospho-D-ribosyl)glycinamide: step 2/2. This Leptospira interrogans serogroup Icterohaemorrhagiae serovar Lai (strain 56601) protein is Phosphoribosylformylglycinamidine cyclo-ligase.